The primary structure comprises 477 residues: M-phase inducer phosphatase 3 (477 aa).

The disordered stretch occupies residues 1 to 20 (MSAEFFSSKREEGSLASGPS). Residue S2 is modified to N-acetylserine. Residues S20 and S38 each carry the phosphoserine modification. T48 carries the phosphothreonine; by CDK1 modification. 3 positions are modified to phosphoserine: S58, S62, and S65. Phosphothreonine; by CDK1 is present on T68. At S123 the chain carries Phosphoserine; by CDK1. Residue S130 is modified to Phosphoserine. A Phosphothreonine modification is found at T131. S169 carries the phosphoserine; by CDK1 modification. Phosphoserine; by PLK3 occurs at positions 192 and 199. A Phosphoserine; by CDK1 modification is found at S218. Phosphoserine; by CHEK1, CHEK2, BRSK1, MAPK14 AND MARK3 is present on S220. A Rhodanese domain is found at 325 to 432 (LIEKFYIIDC…FFPEYMELCE (108 aa)). C381 is an active-site residue. At S476 the chain carries Phosphoserine.

The protein belongs to the MPI phosphatase family. Interacts with MAPK14 and 14-3-3 proteins. When phosphorylated on Ser-130 and/or Thr-131, interacts with PLK1. Interacts with MARK3/C-TAK1. Phosphorylated by CHEK1 and MAPK14 at Ser-220. This phosphorylation creates a binding site for 14-3-3 protein and inhibits the phosphatase. Phosphorylated by PLK4. Phosphorylated by PLK1, leading to activate the phosphatase activity. Phosphorylation by PLK3 at Ser-192 promotes nuclear translocation. Ser-199 is a minor phosphorylation site. Phosphorylation by CDK1 occurs at G2 and G2-M transition and leads to increased activity.

It is found in the nucleus. It carries out the reaction O-phospho-L-tyrosyl-[protein] + H2O = L-tyrosyl-[protein] + phosphate. Functions as a dosage-dependent inducer in mitotic control. Tyrosine protein phosphatase required for progression of the cell cycle. When phosphorylated, highly effective in activating G2 cells into prophase. Directly dephosphorylates CDK1 and activates its kinase activity. This Bos taurus (Bovine) protein is M-phase inducer phosphatase 3 (CDC25C).